The primary structure comprises 1435 residues: Cardiac-enriched FHL2-interacting protein (1435 aa).

4 disordered regions span residues 109-176 (EEKY…PPKF), 203-234 (SNTH…GSSS), 250-270 (FPSP…GTFL), and 291-311 (KDTA…DTTL). Thr-120 carries the post-translational modification Phosphothreonine. Polar residues predominate over residues 133-147 (LRSSNKPVSKVSTLI). Positions 149–160 (SFDRTESQRCES) are enriched in basic and acidic residues. Ser-323 is modified (phosphoserine). 6 disordered regions span residues 362–592 (EGKA…LTLS), 609–772 (AERS…EKEN), 795–847 (SQGE…SPSS), 1007–1108 (PEGD…ARVT), 1138–1261 (SPRG…PGGP), and 1363–1435 (QGPR…EGIS). The span at 389-402 (KGKESLQDTLEEKT) shows a compositional bias: basic and acidic residues. Ser-470 carries the post-translational modification Phosphoserine. Composition is skewed to basic and acidic residues over residues 479 to 493 (QEKE…DSYK), 522 to 535 (VLDE…DGKQ), 609 to 620 (AERSSYENKEVE), and 650 to 667 (CNRD…KTHQ). Residues 668-679 (LENGLSRSVSQE) show a composition bias toward polar residues. Positions 727-741 (KFSTSSSDQSFASFD) are enriched in low complexity. The segment covering 751 to 772 (NQREDRRKDVSAGDSQKDEKEN) has biased composition (basic and acidic residues). Phosphoserine is present on Ser-816. Positions 831–847 (KGTTFSQAKDLTPSPSS) are enriched in polar residues. The span at 1055 to 1066 (NSPNPGSPGESS) shows a compositional bias: low complexity. Positions 1067–1082 (ACSPAASNIWEESSQA) are enriched in polar residues. Over residues 1083–1093 (PGGPELLPEEP) the composition is skewed to low complexity. Positions 1094–1105 (NQASPWASSSPA) are enriched in polar residues. Residues 1182 to 1193 (RRAKKLASKRRK) are compositionally biased toward basic residues. Residues 1194-1211 (TDQAQEKHGESQEGKPCP) are compositionally biased toward basic and acidic residues. Acidic residues predominate over residues 1424 to 1435 (DDLEDFATEGIS).

In terms of assembly, interacts with FHL2. Expressed in the heart and skeletal muscle.

It is found in the cytoplasm. It localises to the myofibril. The protein localises to the sarcomere. Its subcellular location is the z line. In terms of biological role, plays an important role in cardiomyocyte hypertrophy via activation of the calcineurin/NFAT signaling pathway. The polypeptide is Cardiac-enriched FHL2-interacting protein (Homo sapiens (Human)).